Consider the following 219-residue polypeptide: MTNNEKVINNKKSTDSSKLFRYQAKFVAGAMNINQIPNFLLPEIAFIGKSNVGKSSLINTICNNKNLAKVSNIPGRTGQINFFNLADKLIIVDLPGYGFANVPISVKEQWEVLISYYLRNSNNLRLVNLLIDSRRGIKENDKKVAELLLKNKRSFQIIFTKFDKVTDCKNLTDEAQNFLTTLHYSCNVMYVSSRSKEGARELKASLAKCIIKPQRSKGR.

The EngB-type G domain occupies 40–212 (LLPEIAFIGK…KASLAKCIIK (173 aa)). GTP-binding positions include 48–55 (GKSNVGKS), 75–79 (GRTGQ), 93–96 (DLPG), 160–163 (TKFD), and 191–193 (VSS). The Mg(2+) site is built by Ser55 and Thr77.

It belongs to the TRAFAC class TrmE-Era-EngA-EngB-Septin-like GTPase superfamily. EngB GTPase family. Requires Mg(2+) as cofactor.

Necessary for normal cell division and for the maintenance of normal septation. In Rickettsia canadensis (strain McKiel), this protein is Probable GTP-binding protein EngB.